The following is a 394-amino-acid chain: Phosphoglycerate kinase (394 aa).

Substrate-binding positions include 21-23 (DLN), arginine 37, 60-63 (HLGR), arginine 115, and arginine 148. Residues lysine 199, glutamate 321, and 347–350 (GGDT) each bind ATP.

This sequence belongs to the phosphoglycerate kinase family. As to quaternary structure, monomer.

It is found in the cytoplasm. It carries out the reaction (2R)-3-phosphoglycerate + ATP = (2R)-3-phospho-glyceroyl phosphate + ADP. It functions in the pathway carbohydrate degradation; glycolysis; pyruvate from D-glyceraldehyde 3-phosphate: step 2/5. This chain is Phosphoglycerate kinase, found in Azoarcus sp. (strain BH72).